The following is a 232-amino-acid chain: Flagellar L-ring protein (232 aa).

Positions 1–21 (MQKNAAHTYAISSLLVLSLTG) are cleaved as a signal peptide. Residue Cys-22 is the site of N-palmitoyl cysteine attachment. Cys-22 carries the S-diacylglycerol cysteine lipid modification.

It belongs to the FlgH family. As to quaternary structure, the basal body constitutes a major portion of the flagellar organelle and consists of four rings (L,P,S, and M) mounted on a central rod.

Its subcellular location is the cell outer membrane. The protein resides in the bacterial flagellum basal body. Its function is as follows. Assembles around the rod to form the L-ring and probably protects the motor/basal body from shearing forces during rotation. This Shigella boydii serotype 18 (strain CDC 3083-94 / BS512) protein is Flagellar L-ring protein.